The primary structure comprises 348 residues: tRNA N6-adenosine threonylcarbamoyltransferase (348 aa).

Fe cation-binding residues include histidine 116 and histidine 120. Residues 138–142, aspartate 171, glycine 184, aspartate 188, and asparagine 277 each bind substrate; that span reads QVSGG. Residue aspartate 309 participates in Fe cation binding.

It belongs to the KAE1 / TsaD family. Fe(2+) serves as cofactor.

The protein resides in the cytoplasm. The enzyme catalyses L-threonylcarbamoyladenylate + adenosine(37) in tRNA = N(6)-L-threonylcarbamoyladenosine(37) in tRNA + AMP + H(+). In terms of biological role, required for the formation of a threonylcarbamoyl group on adenosine at position 37 (t(6)A37) in tRNAs that read codons beginning with adenine. Is involved in the transfer of the threonylcarbamoyl moiety of threonylcarbamoyl-AMP (TC-AMP) to the N6 group of A37, together with TsaE and TsaB. TsaD likely plays a direct catalytic role in this reaction. This Lactobacillus johnsonii (strain CNCM I-12250 / La1 / NCC 533) protein is tRNA N6-adenosine threonylcarbamoyltransferase.